Reading from the N-terminus, the 375-residue chain is Trichodiene synthase (375 aa).

This sequence belongs to the trichodiene synthase family.

The enzyme catalyses (2E,6E)-farnesyl diphosphate = trichodiene + diphosphate. It functions in the pathway sesquiterpene biosynthesis; trichothecene biosynthesis. Functionally, TS is a member of the terpene cyclase group of enzymes. It catalyzes the isomerization and cyclization of farnesyl pyro-phosphate to form trichodiene, the first cyclic intermediate in the biosynthetic pathway for trichothecenes. It serves to branch trichothecene biosynthesis from the isoprenoid pathway. The polypeptide is Trichodiene synthase (TRI5) (Fusarium austroamericanum).